Here is a 95-residue protein sequence, read N- to C-terminus: Large ribosomal subunit protein bL25 (95 aa).

Belongs to the bacterial ribosomal protein bL25 family. As to quaternary structure, part of the 50S ribosomal subunit; part of the 5S rRNA/L5/L18/L25 subcomplex. Contacts the 5S rRNA. Binds to the 5S rRNA independently of L5 and L18.

Functionally, this is one of the proteins that binds to the 5S RNA in the ribosome where it forms part of the central protuberance. The chain is Large ribosomal subunit protein bL25 from Haemophilus influenzae (strain ATCC 51907 / DSM 11121 / KW20 / Rd).